The sequence spans 936 residues: Isoleucine--tRNA ligase (936 aa).

The 'HIGH' region signature appears at 58–68 (PYANGRAHLGT). Glu-561 lines the L-isoleucyl-5'-AMP pocket. Residues 602-606 (KMSKS) carry the 'KMSKS' region motif. An ATP-binding site is contributed by Lys-605. The Zn(2+) site is built by Cys-899, Cys-902, Cys-919, and Cys-922.

This sequence belongs to the class-I aminoacyl-tRNA synthetase family. IleS type 1 subfamily. As to quaternary structure, monomer. Zn(2+) is required as a cofactor.

It is found in the cytoplasm. The catalysed reaction is tRNA(Ile) + L-isoleucine + ATP = L-isoleucyl-tRNA(Ile) + AMP + diphosphate. In terms of biological role, catalyzes the attachment of isoleucine to tRNA(Ile). As IleRS can inadvertently accommodate and process structurally similar amino acids such as valine, to avoid such errors it has two additional distinct tRNA(Ile)-dependent editing activities. One activity is designated as 'pretransfer' editing and involves the hydrolysis of activated Val-AMP. The other activity is designated 'posttransfer' editing and involves deacylation of mischarged Val-tRNA(Ile). The chain is Isoleucine--tRNA ligase from Coxiella burnetii (strain Dugway 5J108-111).